The primary structure comprises 445 residues: 3-phosphoshikimate 1-carboxyvinyltransferase (445 aa).

3-phosphoshikimate-binding residues include lysine 28, serine 29, and arginine 33. Lysine 28 is a binding site for phosphoenolpyruvate. Glycine 101 and arginine 129 together coordinate phosphoenolpyruvate. The 3-phosphoshikimate site is built by serine 175, glutamine 177, aspartate 328, and lysine 355. A phosphoenolpyruvate-binding site is contributed by glutamine 177. The active-site Proton acceptor is aspartate 328. The phosphoenolpyruvate site is built by arginine 359 and arginine 402.

Belongs to the EPSP synthase family. In terms of assembly, monomer.

The protein resides in the cytoplasm. It catalyses the reaction 3-phosphoshikimate + phosphoenolpyruvate = 5-O-(1-carboxyvinyl)-3-phosphoshikimate + phosphate. The protein operates within metabolic intermediate biosynthesis; chorismate biosynthesis; chorismate from D-erythrose 4-phosphate and phosphoenolpyruvate: step 6/7. Its function is as follows. Catalyzes the transfer of the enolpyruvyl moiety of phosphoenolpyruvate (PEP) to the 5-hydroxyl of shikimate-3-phosphate (S3P) to produce enolpyruvyl shikimate-3-phosphate and inorganic phosphate. This is 3-phosphoshikimate 1-carboxyvinyltransferase from Rhodopseudomonas palustris (strain BisA53).